The primary structure comprises 161 residues: Small ribosomal subunit protein uS9 (161 aa).

2 disordered regions span residues 1–28 and 142–161; these read MAQISDSLDVAPESFSTETPNEEAPKAP and KERKKAGLKKARKAPQFSKR.

The protein belongs to the universal ribosomal protein uS9 family.

The chain is Small ribosomal subunit protein uS9 from Clavibacter sepedonicus (Clavibacter michiganensis subsp. sepedonicus).